Reading from the N-terminus, the 217-residue chain is Adenylate kinase (217 aa).

10–15 contacts ATP; that stretch reads GGGKGT. An NMP region spans residues 30–59; it reads STGDMLRAAVASGSEVGKKAKAVMDAGQLV. AMP contacts are provided by residues threonine 31, arginine 36, 57–59, 85–88, and glutamine 92; these read QLV and GFPR. The tract at residues 126 to 164 is LID; it reads GRYTCAKCGAGYHDKFQLPQVAGKCDSCGGTEFARRPDD. Residue arginine 127 coordinates ATP. Cysteine 130, cysteine 133, cysteine 150, and cysteine 153 together coordinate Zn(2+). 2 residues coordinate AMP: arginine 161 and arginine 172. Methionine 200 contributes to the ATP binding site.

Belongs to the adenylate kinase family. In terms of assembly, monomer.

Its subcellular location is the cytoplasm. The catalysed reaction is AMP + ATP = 2 ADP. Its pathway is purine metabolism; AMP biosynthesis via salvage pathway; AMP from ADP: step 1/1. Functionally, catalyzes the reversible transfer of the terminal phosphate group between ATP and AMP. Plays an important role in cellular energy homeostasis and in adenine nucleotide metabolism. The sequence is that of Adenylate kinase from Paramagnetospirillum magneticum (strain ATCC 700264 / AMB-1) (Magnetospirillum magneticum).